The primary structure comprises 131 residues: Small ribosomal subunit protein uS8 (131 aa).

It belongs to the universal ribosomal protein uS8 family. Part of the 30S ribosomal subunit. Contacts proteins S5 and S12.

Its function is as follows. One of the primary rRNA binding proteins, it binds directly to 16S rRNA central domain where it helps coordinate assembly of the platform of the 30S subunit. The sequence is that of Small ribosomal subunit protein uS8 from Campylobacter fetus subsp. fetus (strain 82-40).